Reading from the N-terminus, the 99-residue chain is MKRLTLVCSIVFILFILFYDLKIGTIPIQDLPVYEASAKTAVQEPAYKTVKVKPGDTVMSIVGSAGSPDDIVKDFEALNPNVKANAIQAGTAYKFPVYP.

The helical transmembrane segment at L6 to I26 threads the bilayer. One can recognise a LysM domain in the interval K48–F95.

The protein resides in the secreted. It is found in the cell wall. It localises to the membrane. This is an uncharacterized protein from Bacillus subtilis (strain 168).